Consider the following 556-residue polypeptide: Melanoma-associated antigen B4 (556 aa).

A compositionally biased stretch (basic residues) spans 1-15 (MPRGQKSKARAREKR). The tract at residues 1–110 (MPRGQKSKAR…RFSENPQNDL (110 aa)) is disordered. Over residues 39–73 (PSCSNQDSGDAVASTSTAGFPQKSKSQGEAPTTTA) the composition is skewed to polar residues. Basic residues predominate over residues 77-87 (GACRRSRKSTR). The region spanning 111–310 (LTRKTGMLMQ…QAFPTHYEEA (200 aa)) is the MAGE domain. Positions 315–335 (EERAQAEAVGSPGTSAKDKAE) are disordered. Serine 325 is modified (phosphoserine). 15 consecutive repeat copies span residues 334-348 (AEAKVTLVDSSCKYQ), 349-363 (AESKVTLVDSSCKDQ), 364-378 (AESKVTLVDPSCKDN), 379-392 (AKSKVTLGSSRKYK), 393-407 (AKSKVPLVDSSCKDQ), 408-421 (AESKVTLVDSCKDQ), 422-436 (AESKVTLVDSSCKDQ), 437-451 (AESKVTLVDSSCKDQ), 452-466 (AESKVTLVDPSCKDK), 467-480 (AKSKVTLGSSHKYK), 481-495 (AKSKVTLVDSSCKDQ), 496-510 (AESKVTLVDSSCKDQ), 511-525 (AESKVTLVDPSCKDN), 526-539 (AKSKVTLGSSRKYK), and 540-554 (AKSKVPLVDSSGKDK). The interval 334-554 (AEAKVTLVDS…PLVDSSGKDK (221 aa)) is 15 X 15 AA approximate tandem repeats.

As to expression, expressed in testis (at protein level).

It localises to the cytoplasm. In Mus musculus (Mouse), this protein is Melanoma-associated antigen B4.